The sequence spans 194 residues: FMN-dependent NADH:quinone oxidoreductase (194 aa).

FMN-binding positions include Ser-10 and 90–93 (MYNL).

Belongs to the azoreductase type 1 family. As to quaternary structure, homodimer. The cofactor is FMN.

It catalyses the reaction 2 a quinone + NADH + H(+) = 2 a 1,4-benzosemiquinone + NAD(+). The enzyme catalyses N,N-dimethyl-1,4-phenylenediamine + anthranilate + 2 NAD(+) = 2-(4-dimethylaminophenyl)diazenylbenzoate + 2 NADH + 2 H(+). Its function is as follows. Quinone reductase that provides resistance to thiol-specific stress caused by electrophilic quinones. Functionally, also exhibits azoreductase activity. Catalyzes the reductive cleavage of the azo bond in aromatic azo compounds to the corresponding amines. The protein is FMN-dependent NADH:quinone oxidoreductase of Haemophilus influenzae (strain ATCC 51907 / DSM 11121 / KW20 / Rd).